Reading from the N-terminus, the 344-residue chain is L-rhamnose-proton symporter (344 aa).

10 helical membrane passes run 5–25 (ILLG…FYAP), 38–58 (WAIA…YWLL), 72–92 (ILLP…GYGL), 101–121 (MGIG…TPII), 137–157 (TLIG…AGLL), 175–195 (LALA…MSAA), 214–234 (LPSY…FCII), 259–279 (ILFS…YAWG), 289–309 (FMSW…VGLL), and 323–343 (VLCI…LGMA).

Belongs to the L-rhamnose transporter (TC 2.A.7.6) family.

It localises to the cell inner membrane. The catalysed reaction is L-rhamnopyranose(in) + H(+)(in) = L-rhamnopyranose(out) + H(+)(out). Its function is as follows. Uptake of L-rhamnose across the cytoplasmic membrane with the concomitant transport of protons into the cell (symport system). This is L-rhamnose-proton symporter from Mannheimia succiniciproducens (strain KCTC 0769BP / MBEL55E).